The following is a 188-amino-acid chain: UPF0301 protein ABO_0112 (188 aa).

It belongs to the UPF0301 (AlgH) family.

The polypeptide is UPF0301 protein ABO_0112 (Alcanivorax borkumensis (strain ATCC 700651 / DSM 11573 / NCIMB 13689 / SK2)).